A 148-amino-acid polypeptide reads, in one-letter code: Large ribosomal subunit protein bL9 (148 aa).

The protein belongs to the bacterial ribosomal protein bL9 family.

In terms of biological role, binds to the 23S rRNA. This Salinispora arenicola (strain CNS-205) protein is Large ribosomal subunit protein bL9.